A 566-amino-acid polypeptide reads, in one-letter code: NXPE family member 3 (566 aa).

A signal peptide spans 1-32 (MEKYFPKYVPFFSLLALSGLLYLLWSITSLES). Asn-64, Asn-172, Asn-242, Asn-303, and Asn-344 each carry an N-linked (GlcNAc...) asparagine glycan.

It belongs to the NXPE family.

It is found in the secreted. In Danio rerio (Zebrafish), this protein is NXPE family member 3 (nxpe3).